Reading from the N-terminus, the 794-residue chain is Signal transducer and activator of transcription 5A (794 aa).

A Phosphotyrosine modification is found at tyrosine 90. 2 positions are modified to phosphoserine: serine 128 and serine 193. In terms of domain architecture, SH2 spans 589–686; that stretch reads WNDGAILGFV…EVFSKYYTPV (98 aa). Tyrosine 682 is subject to Phosphotyrosine. The residue at position 694 (tyrosine 694) is a Phosphotyrosine; by JAK2. The disordered stretch occupies residues 773–794; the sequence is DSLDSRLSPPAGLFTSARGSLS. Position 780 is a phosphoserine (serine 780).

It belongs to the transcription factor STAT family. As to quaternary structure, forms a homodimer or a heterodimer with a related family member. Binds NR3C1. Interacts with NCOA1 and SOCS7. Interacts with ERBB4. Interacts with EBF4. Interacts with CD69. Post-translationally, tyrosine phosphorylated in response to KITLG/SCF, IL2, IL3, IL7, IL15, CSF2/GMCSF, GH1, PRL, EPO and THPO. Activated KIT promotes phosphorylation on tyrosine residues and subsequent translocation to the nucleus. Tyrosine phosphorylated in response to constitutively activated FGFR1, FGFR2, FGFR3 and FGFR4. Tyrosine phosphorylation is required for DNA-binding activity and dimerization. Serine phosphorylation is also required for maximal transcriptional activity. Tyrosine phosphorylated in response to signaling via activated FLT3; wild-type FLT3 results in much weaker phosphorylation than constitutively activated mutant FLT3. Alternatively, can be phosphorylated by JAK2 at Tyr-694. ISGylated.

It is found in the cytoplasm. The protein resides in the nucleus. Functionally, carries out a dual function: signal transduction and activation of transcription. Mediates cellular responses to the cytokine KITLG/SCF and other growth factors. Mediates cellular responses to ERBB4. May mediate cellular responses to activated FGFR1, FGFR2, FGFR3 and FGFR4. Binds to the GAS element and activates PRL-induced transcription. Regulates the expression of milk proteins during lactation. This Homo sapiens (Human) protein is Signal transducer and activator of transcription 5A (STAT5A).